The primary structure comprises 121 residues: Basic phospholipase A2 homolog AppP2 (121 aa).

Intrachain disulfides connect Cys-26–Cys-115, Cys-28–Cys-44, Cys-43–Cys-95, Cys-49–Cys-121, Cys-50–Cys-88, Cys-57–Cys-81, and Cys-75–Cys-86. The important for membrane-damaging activities in eukaryotes and bacteria; heparin-binding stretch occupies residues 105–117; sequence KKYKAYFKLKCKK.

This sequence belongs to the phospholipase A2 family. Group II subfamily. K49 sub-subfamily. In terms of assembly, monomer. In terms of tissue distribution, expressed by the venom gland.

It is found in the secreted. Snake venom phospholipase A2 (PLA2) that lacks enzymatic activity. Displays edema-inducing activities. Is myotoxic. A model of myotoxic mechanism has been proposed: an apo Lys49-PLA2 is activated by the entrance of a hydrophobic molecule (e.g. fatty acid) at the hydrophobic channel of the protein leading to a reorientation of a monomer. This reorientation causes a transition between 'inactive' to 'active' states, causing alignment of C-terminal and membrane-docking sites (MDoS) side-by-side and putting the membrane-disruption sites (MDiS) in the same plane, exposed to solvent and in a symmetric position for both monomers. The MDoS region stabilizes the toxin on membrane by the interaction of charged residues with phospholipid head groups. Subsequently, the MDiS region destabilizes the membrane with penetration of hydrophobic residues. This insertion causes a disorganization of the membrane, allowing an uncontrolled influx of ions (i.e. calcium and sodium), and eventually triggering irreversible intracellular alterations and cell death. This is Basic phospholipase A2 homolog AppP2 from Agkistrodon piscivorus piscivorus (Eastern cottonmouth).